A 332-amino-acid polypeptide reads, in one-letter code: ATP-dependent (S)-NAD(P)H-hydrate dehydratase (332 aa).

The YjeF C-terminal domain maps to 46-326 (LLERARNIVP…EQIHNVFDDI (281 aa)). Residues G146 and 199–205 (NAIEFCR) contribute to the (6S)-NADPHX site. Residues 230-234 (KGLND) and 251-260 (GSGRRCGGQG) each bind ATP. D261 contacts (6S)-NADPHX.

This sequence belongs to the NnrD/CARKD family. It depends on Mg(2+) as a cofactor.

It carries out the reaction (6S)-NADHX + ATP = ADP + phosphate + NADH + H(+). The catalysed reaction is (6S)-NADPHX + ATP = ADP + phosphate + NADPH + H(+). Catalyzes the dehydration of the S-form of NAD(P)HX at the expense of ATP, which is converted to ADP. Together with NAD(P)HX epimerase, which catalyzes the epimerization of the S- and R-forms, the enzyme allows the repair of both epimers of NAD(P)HX, a damaged form of NAD(P)H that is a result of enzymatic or heat-dependent hydration. This is ATP-dependent (S)-NAD(P)H-hydrate dehydratase from Aedes aegypti (Yellowfever mosquito).